Reading from the N-terminus, the 76-residue chain is Alpha/kappa-conotoxin-like pl14.1 (76 aa).

An N-terminal signal peptide occupies residues 1–27 (MPSVRSVTCCCLLWMMLSVQLVTPGSP). A propeptide spanning residues 28 to 39 (ATAQLSGQRTAR) is cleaved from the precursor. Intrachain disulfides connect Cys-46-Cys-61 and Cys-50-Cys-63. The residue at position 64 (Asn-64) is an Asparagine amide. The propeptide occupies 65–76 (GKRDVVSSSMAV).

Belongs to the conotoxin J superfamily. Expressed by the venom duct.

The protein resides in the secreted. Highly inhibits both nicotinic acetylcholine receptors (neuronal (alpha-3/beta-4) and muscular (alpha-1/beta-1/epsilon/delta) subtypes) and the voltage-gated potassium channel Kv1.6/KCNA6 subtype. The polypeptide is Alpha/kappa-conotoxin-like pl14.1 (Conus planorbis (Planorbis cone)).